Here is a 335-residue protein sequence, read N- to C-terminus: Foldase protein PrsA (335 aa).

An N-terminal signal peptide occupies residues methionine 1 to alanine 20. The N-palmitoyl cysteine moiety is linked to residue cysteine 21. A lipid anchor (S-diacylglycerol cysteine) is attached at cysteine 21. The PpiC domain maps to threonine 142–lysine 239. The segment at threonine 300–glutamate 335 is disordered. The segment covering serine 302–glutamate 335 has biased composition (low complexity).

It belongs to the PrsA family.

It is found in the cell membrane. The catalysed reaction is [protein]-peptidylproline (omega=180) = [protein]-peptidylproline (omega=0). Plays a major role in protein secretion by helping the post-translocational extracellular folding of several secreted proteins. The sequence is that of Foldase protein PrsA from Streptococcus sanguinis (strain SK36).